We begin with the raw amino-acid sequence, 285 residues long: 2-dehydro-3-deoxyphosphooctonate aldolase (285 aa).

It belongs to the KdsA family.

The protein resides in the cytoplasm. The catalysed reaction is D-arabinose 5-phosphate + phosphoenolpyruvate + H2O = 3-deoxy-alpha-D-manno-2-octulosonate-8-phosphate + phosphate. It functions in the pathway carbohydrate biosynthesis; 3-deoxy-D-manno-octulosonate biosynthesis; 3-deoxy-D-manno-octulosonate from D-ribulose 5-phosphate: step 2/3. Its pathway is bacterial outer membrane biogenesis; lipopolysaccharide biosynthesis. This chain is 2-dehydro-3-deoxyphosphooctonate aldolase, found in Albidiferax ferrireducens (strain ATCC BAA-621 / DSM 15236 / T118) (Rhodoferax ferrireducens).